Here is a 344-residue protein sequence, read N- to C-terminus: Holliday junction branch migration complex subunit RuvB (344 aa).

Residues 1 to 182 are large ATPase domain (RuvB-L); that stretch reads MSDRLISATA…FGIISRLEFY (182 aa). Residues leucine 21, arginine 22, glycine 63, lysine 66, threonine 67, threonine 68, 129-131, arginine 172, tyrosine 182, and arginine 219 each bind ATP; that span reads EDF. Threonine 67 is a binding site for Mg(2+). Positions 183-253 are small ATPAse domain (RuvB-S); the sequence is NNEDLTRIVT…VAAEALEFFE (71 aa). Positions 256-344 are head domain (RuvB-H); sequence PLGLDHTDRR…QKGLEQNSLF (89 aa). Residues arginine 311 and arginine 316 each contribute to the DNA site.

The protein belongs to the RuvB family. In terms of assembly, homohexamer. Forms an RuvA(8)-RuvB(12)-Holliday junction (HJ) complex. HJ DNA is sandwiched between 2 RuvA tetramers; dsDNA enters through RuvA and exits via RuvB. An RuvB hexamer assembles on each DNA strand where it exits the tetramer. Each RuvB hexamer is contacted by two RuvA subunits (via domain III) on 2 adjacent RuvB subunits; this complex drives branch migration. In the full resolvosome a probable DNA-RuvA(4)-RuvB(12)-RuvC(2) complex forms which resolves the HJ.

The protein localises to the cytoplasm. It catalyses the reaction ATP + H2O = ADP + phosphate + H(+). The RuvA-RuvB-RuvC complex processes Holliday junction (HJ) DNA during genetic recombination and DNA repair, while the RuvA-RuvB complex plays an important role in the rescue of blocked DNA replication forks via replication fork reversal (RFR). RuvA specifically binds to HJ cruciform DNA, conferring on it an open structure. The RuvB hexamer acts as an ATP-dependent pump, pulling dsDNA into and through the RuvAB complex. RuvB forms 2 homohexamers on either side of HJ DNA bound by 1 or 2 RuvA tetramers; 4 subunits per hexamer contact DNA at a time. Coordinated motions by a converter formed by DNA-disengaged RuvB subunits stimulates ATP hydrolysis and nucleotide exchange. Immobilization of the converter enables RuvB to convert the ATP-contained energy into a lever motion, pulling 2 nucleotides of DNA out of the RuvA tetramer per ATP hydrolyzed, thus driving DNA branch migration. The RuvB motors rotate together with the DNA substrate, which together with the progressing nucleotide cycle form the mechanistic basis for DNA recombination by continuous HJ branch migration. Branch migration allows RuvC to scan DNA until it finds its consensus sequence, where it cleaves and resolves cruciform DNA. The sequence is that of Holliday junction branch migration complex subunit RuvB from Desulforamulus reducens (strain ATCC BAA-1160 / DSM 100696 / MI-1) (Desulfotomaculum reducens).